The primary structure comprises 111 residues: UPF0145 protein BRADO6695 (111 aa).

This sequence belongs to the UPF0145 family.

The polypeptide is UPF0145 protein BRADO6695 (Bradyrhizobium sp. (strain ORS 278)).